Consider the following 202-residue polypeptide: B-cell CLL/lymphoma 7 protein family member B (202 aa).

The segment at 53-202 (DSKEKEKSKS…PTVPQTASES (150 aa)) is disordered. Polar residues predominate over residues 90–99 (ENSNQSSVSD). A compositionally biased stretch (low complexity) spans 107–123 (SSTNSSPSPQQSESLSP). Serine 114, serine 118, serine 120, serine 122, serine 127, serine 148, and serine 152 each carry phosphoserine.

This sequence belongs to the BCL7 family. Ubiquitous.

Functionally, positive regulator of apoptosis. Plays a role in the Wnt signaling pathway, negatively regulating the expression of Wnt signaling components CTNNB1 and HMGA1. Involved in cell cycle progression, maintenance of the nuclear structure and stem cell differentiation. May play a role in lung tumor development or progression. In Homo sapiens (Human), this protein is B-cell CLL/lymphoma 7 protein family member B (BCL7B).